A 226-amino-acid polypeptide reads, in one-letter code: 7-cyano-7-deazaguanine synthase (226 aa).

8–18 is a binding site for ATP; the sequence is ISGGLDSTTCL. Zn(2+) is bound by residues cysteine 188, cysteine 198, cysteine 201, and cysteine 204.

The protein belongs to the QueC family. It depends on Zn(2+) as a cofactor.

It catalyses the reaction 7-carboxy-7-deazaguanine + NH4(+) + ATP = 7-cyano-7-deazaguanine + ADP + phosphate + H2O + H(+). It participates in purine metabolism; 7-cyano-7-deazaguanine biosynthesis. In terms of biological role, catalyzes the ATP-dependent conversion of 7-carboxy-7-deazaguanine (CDG) to 7-cyano-7-deazaguanine (preQ(0)). This is 7-cyano-7-deazaguanine synthase from Coxiella burnetii (strain Dugway 5J108-111).